The sequence spans 461 residues: Flavin-containing monooxygenase FMO GS-OX-like 8 (461 aa).

20-25 provides a ligand contact to FAD; it reads GAGPSG. 220–225 is a binding site for NADP(+); it reads GCSMSG.

It belongs to the FMO family. In terms of assembly, interacts with EER5. FAD is required as a cofactor.

Its function is as follows. Catalyzes the conversion of methylthioalkyl glucosinolates of any chain length into methylsulfinylalkyl glucosinolates. The sequence is that of Flavin-containing monooxygenase FMO GS-OX-like 8 from Arabidopsis thaliana (Mouse-ear cress).